Here is a 309-residue protein sequence, read N- to C-terminus: MEMSLRLASSSTSNPICLLNPGKNLNFPIRNHRIPKTSKPFCVRSSMSLSKPPRQTLSSNWDVSSFSIDSVAQSPSRLPSFEELDTTNMLLRQRIVFLGSQVDDMTADLVISQLLLLDAEDSERDITLFINSPGGSITAGMGIYDAMKQCKADVSTVCLGLAASMGAFLLASGSKGKRYCMPNSKVMIHQPLGTAGGKATEMSIRIREMMYHKIKLNKIFSRITGKPESEIESDTDRDNFLNPWEAKEYGLIDAVIDDGKPGLIAPIGDGTPPPKTKVWDLWKVEGTKKDNTNLPSERSMTQNGYAAIE.

A chloroplast-targeting transit peptide spans 1–70; that stretch reads MEMSLRLASS…WDVSSFSIDS (70 aa). N-acetylvaline is present on valine 71. Residue serine 164 is the Nucleophile of the active site. The active site involves histidine 189. The residue at position 194 (threonine 194) is a Phosphothreonine. The segment at 290–309 is disordered; it reads DNTNLPSERSMTQNGYAAIE. Polar residues predominate over residues 292-309; the sequence is TNLPSERSMTQNGYAAIE.

It belongs to the peptidase S14 family. Component of the chloroplastic Clp protease core complex which consist of at least 16 proteins: CLPP4 (3 copies), CLPP5 (3 copies), CLPR4 (2 copies), ClpP1 (1 copy), CLPP6 (1 copy), CLPR2 (1 copy), CLPT1 (1 copy), CLPT2 (1 copy) and 3 copies of CLPP3 and/or CLPR1 and/or CLPR3. The core complex is organized in two heptameric rings, one containing CLPP3,4,5,6 in a 1:2:3:1 ratio and the other CLPP1 and CLPR1,2,3,4 in a 3:1:1:1:1 ratio. Interacts with CHIP. Post-translationally, ubiquitinated in vitro by CHIP. Mostly expressed in leaves. Also detected in stems, and to a lower extent, in roots (at protein level).

It is found in the plastid. Its subcellular location is the chloroplast stroma. The catalysed reaction is Hydrolysis of proteins to small peptides in the presence of ATP and magnesium. alpha-casein is the usual test substrate. In the absence of ATP, only oligopeptides shorter than five residues are hydrolyzed (such as succinyl-Leu-Tyr-|-NHMec, and Leu-Tyr-Leu-|-Tyr-Trp, in which cleavage of the -Tyr-|-Leu- and -Tyr-|-Trp bonds also occurs).. Cleaves peptides in various proteins in a process that requires ATP hydrolysis. Has a chymotrypsin-like activity. Plays a major role in the degradation of misfolded proteins. In the absence of CLPP3, modified ClpPR core(s) could be formed, albeit at strongly reduced levels. This is ATP-dependent Clp protease proteolytic subunit 3, chloroplastic from Arabidopsis thaliana (Mouse-ear cress).